An 856-amino-acid chain; its full sequence is DNA mismatch repair protein MutS (856 aa).

618–625 (GPNMGGKS) provides a ligand contact to ATP.

It belongs to the DNA mismatch repair MutS family.

Functionally, this protein is involved in the repair of mismatches in DNA. It is possible that it carries out the mismatch recognition step. This protein has a weak ATPase activity. The protein is DNA mismatch repair protein MutS of Shewanella putrefaciens (strain CN-32 / ATCC BAA-453).